The chain runs to 59 residues: Temperature acclimation protein A (59 aa).

The CSD domain occupies 1–55 (FNDEKGFGFITPESGPDLFVHFRAIQGNGFKSLKEGQKVTFIAVQGQKGMQADKV).

The protein localises to the cytoplasm. Its function is as follows. Affects cell viability at low temperatures. In Pseudomonas fragi, this protein is Temperature acclimation protein A (tapA).